A 484-amino-acid chain; its full sequence is MSVTSREQKFSGKYSSYTAQDRQGLVNAVTCVLSSSSDPVAVSSDYSNSLSIAREVNAYAKIAGCDWTYYVQKLEVTIGRNTDSLNLNAVPGTVVKKNIDIDLGPAKIVSRKHAAIRFNLESGSWELQIFGRNGAKVNFRRIPTGPDSPPTVLQSGCIIDIGGVQMIFILPEQETIISDYCLNHLMPKLLSTYGTNGNNNPLLRNIIEGSTYLREQRLQEEARLQQLDHLHTPLSSSSDVNPIGDPHGDTIMMEEDEEDENYTRGGIRPNTYTSSSNNAVTNGNVPHIENPSDLSLDENRYIKPPQSYASMITQAILSTPEGSISLADIYKFISDNYAFYRFSQMAWQNSVRHNLSLNKAFEKVPKRAGQQGKGMNWKISDEVRRDFLNKWNAGKLSKIRRGASVTRQLQLHMSKFGEIPAPESSSIDPRGIKAQKVKKSLQATSSILGESAPQLQRTQLTGQISTTTSMDVTTNANVNNSSLS.

Residues V76–I142 enclose the FHA domain. A DNA-binding region (fork-head) is located at residues I302–A393.

Interacts (via FHA domain) with ECM30, GLN3, URE2, MPH1 AND FDO1. Interacts with the origin recognition complex (ORC) composed of ORC1 to ORC6.

Its subcellular location is the nucleus. The protein localises to the cytoplasm. It localises to the cytosol. Functionally, transcription factor that regulates the expression of the CLB2 cluster of genes during the G2/M phase of the mitotic cell cycle. The CLB2 cluster of genes includes mitotic regulators such as CLB1, CLB2, CDC5 and CDC20 as well as SWI5 and ACE2, transcription factors required for the subsequent temporal wave of cell cycle regulated gene expression in the M/G1 phase interval. Involved in HMRa silencing. FKH1 and FKH2 associate with the coding regions of active genes and influence, in opposing ways, transcriptional elongation and termination, and coordinate early transcription elongation and pre-mRNA processing. Both FKH1 and FKH2 play a role as regulators of lifespan in collaboration with the anaphase-promoting complex (APC), likely through combined regulation of stress response, genomic stability, and cell cycle regulation. FKH1 and FKH2 function also in controlling yeast cell morphology by preventing preudohyphal growth. Acts as a rate-limiting replication origin activator via its interaction with the origin recognition complex (ORC). Plays a transcription-independent role in recombination donor preference during mating-type switching through binding to the recombination enhancer (RE), a 700-bp cis-acting element that controls recombination along the left arm of chromosome III. This Saccharomyces cerevisiae (strain ATCC 204508 / S288c) (Baker's yeast) protein is Fork head protein homolog 1.